A 325-amino-acid chain; its full sequence is Large ribosomal subunit protein uL1m (325 aa).

A mitochondrion-targeting transit peptide spans Met1 to Ala50.

This sequence belongs to the universal ribosomal protein uL1 family. Component of the mitochondrial large ribosomal subunit (mt-LSU). Mature mammalian 55S mitochondrial ribosomes consist of a small (28S) and a large (39S) subunit. The 28S small subunit contains a 12S ribosomal RNA (12S mt-rRNA) and 30 different proteins. The 39S large subunit contains a 16S rRNA (16S mt-rRNA), a copy of mitochondrial valine transfer RNA (mt-tRNA(Val)), which plays an integral structural role, and 52 different proteins.

The protein resides in the mitochondrion. This is Large ribosomal subunit protein uL1m (MRPL1) from Homo sapiens (Human).